The primary structure comprises 194 residues: Small ribosomal subunit protein uS7 (194 aa).

This sequence belongs to the universal ribosomal protein uS7 family. As to quaternary structure, part of the 30S ribosomal subunit.

In terms of biological role, one of the primary rRNA binding proteins, it binds directly to 16S rRNA where it nucleates assembly of the head domain of the 30S subunit. Is located at the subunit interface close to the decoding center. The sequence is that of Small ribosomal subunit protein uS7 from Methanococcus vannielii (strain ATCC 35089 / DSM 1224 / JCM 13029 / OCM 148 / SB).